The following is a 596-amino-acid chain: Elongation factor 4 (596 aa).

The region spanning 2-184 is the tr-type G domain; that stretch reads KQIRNFSIIA…VIVAKIPPPE (183 aa). GTP contacts are provided by residues 14-19 and 131-134; these read DHGKST and NKID.

Belongs to the TRAFAC class translation factor GTPase superfamily. Classic translation factor GTPase family. LepA subfamily.

The protein resides in the cell inner membrane. The enzyme catalyses GTP + H2O = GDP + phosphate + H(+). Required for accurate and efficient protein synthesis under certain stress conditions. May act as a fidelity factor of the translation reaction, by catalyzing a one-codon backward translocation of tRNAs on improperly translocated ribosomes. Back-translocation proceeds from a post-translocation (POST) complex to a pre-translocation (PRE) complex, thus giving elongation factor G a second chance to translocate the tRNAs correctly. Binds to ribosomes in a GTP-dependent manner. In Shewanella baltica (strain OS223), this protein is Elongation factor 4.